Here is a 437-residue protein sequence, read N- to C-terminus: Cytochrome c biogenesis protein Ccs1 (437 aa).

Transmembrane regions (helical) follow at residues leucine 23–isoleucine 43, threonine 82–serine 102, and leucine 168–leucine 188.

This sequence belongs to the Ccs1/CcsB family. In terms of assembly, may interact with CcsA.

The protein localises to the plastid. The protein resides in the chloroplast thylakoid membrane. Required during biogenesis of c-type cytochromes (cytochrome c6 and cytochrome f) at the step of heme attachment. The polypeptide is Cytochrome c biogenesis protein Ccs1 (Porphyra purpurea (Red seaweed)).